The chain runs to 178 residues: Nuclear transcription factor Y subunit B-2 (178 aa).

Residues 39-45 (LPIANIS) mediate DNA binding. A subunit association domain (SAD) region spans residues 66 to 77 (LQECVSEFISFV). Residues 131–156 (SSKAGDGSVKKDTIGPHSGASSSSAQ) are disordered.

The protein belongs to the NFYB/HAP3 subunit family. Heterotrimeric transcription factor composed of three components, NF-YA, NF-YB and NF-YC. NF-YB and NF-YC must interact and dimerize for NF-YA association and DNA binding. Interacts with NFYC4 and NFYC6. As to expression, ubiquitous.

The protein resides in the nucleus. Component of the NF-Y/HAP transcription factor complex. The NF-Y complex stimulates the transcription of various genes by recognizing and binding to a CCAAT motif in promoters. May regulate the expression of photosynthetic genes, and may be involved in chloroplast and amyloplast development. The protein is Nuclear transcription factor Y subunit B-2 (NFYB2) of Oryza sativa subsp. japonica (Rice).